Consider the following 287-residue polypeptide: Nucleotide-binding protein Pmob_0154 (287 aa).

Residue 15–22 (GLSGAGKT) participates in ATP binding. 64-67 (DIRW) provides a ligand contact to GTP.

Belongs to the RapZ-like family.

Functionally, displays ATPase and GTPase activities. This is Nucleotide-binding protein Pmob_0154 from Petrotoga mobilis (strain DSM 10674 / SJ95).